Here is a 205-residue protein sequence, read N- to C-terminus: Large ribosomal subunit protein uL4 (205 aa).

The tract at residues 44-77 (KRQGTSKVKNRSAVRGGGKKPWRQKGTGRARQGS) is disordered. The segment covering 51 to 71 (VKNRSAVRGGGKKPWRQKGTG) has biased composition (basic residues).

It belongs to the universal ribosomal protein uL4 family. In terms of assembly, part of the 50S ribosomal subunit.

In terms of biological role, one of the primary rRNA binding proteins, this protein initially binds near the 5'-end of the 23S rRNA. It is important during the early stages of 50S assembly. It makes multiple contacts with different domains of the 23S rRNA in the assembled 50S subunit and ribosome. Its function is as follows. Forms part of the polypeptide exit tunnel. The sequence is that of Large ribosomal subunit protein uL4 from Lactobacillus delbrueckii subsp. bulgaricus (strain ATCC 11842 / DSM 20081 / BCRC 10696 / JCM 1002 / NBRC 13953 / NCIMB 11778 / NCTC 12712 / WDCM 00102 / Lb 14).